The following is a 292-amino-acid chain: Cbb3-type cytochrome c oxidase subunit CcoP (292 aa).

2 helical membrane-spanning segments follow: residues 11-31 (FGLI…SSLI) and 62-82 (VGWI…FFFG). Cytochrome c domains follow at residues 116–195 (ELVD…MAEI) and 205–288 (QLID…QSLK). Positions 129, 132, 133, 174, 219, 222, 223, and 264 each coordinate heme c.

It belongs to the CcoP / FixP family. In terms of assembly, component of the cbb3-type cytochrome c oxidase at least composed of CcoN, CcoO, CcoQ and CcoP. Requires heme c as cofactor.

Its subcellular location is the cell inner membrane. Its pathway is energy metabolism; oxidative phosphorylation. Its function is as follows. C-type cytochrome. Part of the cbb3-type cytochrome c oxidase complex. CcoP subunit is required for transferring electrons from donor cytochrome c via its heme groups to CcoO subunit. From there, electrons are shuttled to the catalytic binuclear center of CcoN subunit where oxygen reduction takes place. The complex also functions as a proton pump. This chain is Cbb3-type cytochrome c oxidase subunit CcoP, found in Helicobacter pylori (strain 52).